Reading from the N-terminus, the 84-residue chain is Subtilisin-chymotrypsin inhibitor-2A (84 aa).

Residues 1 to 23 form a disordered region; it reads MSSVEKKPEGVNTGAGDRHNLKT.

It belongs to the protease inhibitor I13 (potato type I serine protease inhibitor) family.

Functionally, inhibits both subtilisin and chymotrypsin. This is Subtilisin-chymotrypsin inhibitor-2A from Hordeum vulgare (Barley).